The following is a 122-amino-acid chain: Large ribosomal subunit protein uL18 (122 aa).

Belongs to the universal ribosomal protein uL18 family. In terms of assembly, part of the 50S ribosomal subunit; part of the 5S rRNA/L5/L18/L25 subcomplex. Contacts the 5S and 23S rRNAs.

Its function is as follows. This is one of the proteins that bind and probably mediate the attachment of the 5S RNA into the large ribosomal subunit, where it forms part of the central protuberance. This chain is Large ribosomal subunit protein uL18, found in Leptospira biflexa serovar Patoc (strain Patoc 1 / Ames).